A 329-amino-acid polypeptide reads, in one-letter code: 4-hydroxythreonine-4-phosphate dehydrogenase (329 aa).

Substrate is bound by residues His-136 and Thr-137. Residues His-166, His-211, and His-266 each contribute to the a divalent metal cation site. Substrate-binding residues include Lys-274, Asn-283, and Arg-292.

Belongs to the PdxA family. Homodimer. Zn(2+) serves as cofactor. It depends on Mg(2+) as a cofactor. Requires Co(2+) as cofactor.

The protein resides in the cytoplasm. The enzyme catalyses 4-(phosphooxy)-L-threonine + NAD(+) = 3-amino-2-oxopropyl phosphate + CO2 + NADH. The protein operates within cofactor biosynthesis; pyridoxine 5'-phosphate biosynthesis; pyridoxine 5'-phosphate from D-erythrose 4-phosphate: step 4/5. Catalyzes the NAD(P)-dependent oxidation of 4-(phosphooxy)-L-threonine (HTP) into 2-amino-3-oxo-4-(phosphooxy)butyric acid which spontaneously decarboxylates to form 3-amino-2-oxopropyl phosphate (AHAP). This is 4-hydroxythreonine-4-phosphate dehydrogenase from Shigella boydii serotype 4 (strain Sb227).